An 83-amino-acid polypeptide reads, in one-letter code: Small ribosomal subunit protein bS20 (83 aa).

It belongs to the bacterial ribosomal protein bS20 family.

Functionally, binds directly to 16S ribosomal RNA. This Staphylococcus haemolyticus (strain JCSC1435) protein is Small ribosomal subunit protein bS20.